The following is a 377-amino-acid chain: ATP phosphoribosyltransferase regulatory subunit (377 aa).

The protein belongs to the class-II aminoacyl-tRNA synthetase family. HisZ subfamily. Heteromultimer composed of HisG and HisZ subunits.

The protein localises to the cytoplasm. It functions in the pathway amino-acid biosynthesis; L-histidine biosynthesis; L-histidine from 5-phospho-alpha-D-ribose 1-diphosphate: step 1/9. Required for the first step of histidine biosynthesis. May allow the feedback regulation of ATP phosphoribosyltransferase activity by histidine. The sequence is that of ATP phosphoribosyltransferase regulatory subunit from Sinorhizobium medicae (strain WSM419) (Ensifer medicae).